Reading from the N-terminus, the 128-residue chain is Large ribosomal subunit protein bL12 (128 aa).

It belongs to the bacterial ribosomal protein bL12 family. Homodimer. Part of the ribosomal stalk of the 50S ribosomal subunit. Forms a multimeric L10(L12)X complex, where L10 forms an elongated spine to which 2 to 4 L12 dimers bind in a sequential fashion. Binds GTP-bound translation factors.

Its function is as follows. Forms part of the ribosomal stalk which helps the ribosome interact with GTP-bound translation factors. Is thus essential for accurate translation. This Corynebacterium jeikeium (strain K411) protein is Large ribosomal subunit protein bL12.